Reading from the N-terminus, the 1128-residue chain is Nck-associated protein 1 (1128 aa).

The residue at position 2 (Ser2) is an N-acetylserine. The interval 640–665 (AVNKKSKKQTGKKGEPEREKPGVESM) is disordered. Over residues 651–665 (KKGEPEREKPGVESM) the composition is skewed to basic and acidic residues. A helical transmembrane segment spans residues 995–1015 (IACLLMVFVAVSLPTLASNVM).

The protein belongs to the HEM-1/HEM-2 family. As to quaternary structure, component of the WAVE1 complex composed of ABI2, CYFIP1 or CYFIP2, BRK1, NCKAP1 and WASF1/WAVE1. Within the complex, a heterodimer containing NCKAP1 and CYFIP1 interacts with a heterotrimer formed by WAVE1, ABI2 and BRK1. Component of the WAVE2 complex composed of ABI1, CYFIP1/SRA1, NCKAP1/NAP1 and WASF2/WAVE2. CYFIP2 binds to activated RAC1 which causes the complex to dissociate, releasing activated WASF1. The complex can also be activated by NCK1. Associates preferentially with the first SH3 domain of NCK. Interacts with NYAP1, NYAP2 and MYO16. Interacts with TMEM132D. In terms of assembly, (Microbial infection) Interacts with human cytomegalovirus protein UL135. In terms of tissue distribution, expressed in all tissues examined except peripheral blood leukocytes, with highest expression in brain, heart, and skeletal muscle. Expressed in cells of various brain regions including Purkinje cells and dentate nucleus of the cerebellum, CA4 region and dentate gyrus of the hippocampus, and in frontal gray and white matter.

Its subcellular location is the cell membrane. It localises to the cell projection. It is found in the lamellipodium membrane. Its function is as follows. Part of the WAVE complex that regulates lamellipodia formation. The WAVE complex regulates actin filament reorganization via its interaction with the Arp2/3 complex. Actin remodeling activity is regulated by RAC1. As component of the WAVE1 complex, required for BDNF-NTRK2 endocytic trafficking and signaling from early endosomes. The chain is Nck-associated protein 1 (NCKAP1) from Homo sapiens (Human).